The following is a 162-amino-acid chain: Transcription elongation factor GreA (162 aa).

Positions 46 to 77 (RENAEYKAAREEQTRLNNMVTRLQEEIERAQV) form a coiled coil.

Belongs to the GreA/GreB family.

Necessary for efficient RNA polymerase transcription elongation past template-encoded arresting sites. The arresting sites in DNA have the property of trapping a certain fraction of elongating RNA polymerases that pass through, resulting in locked ternary complexes. Cleavage of the nascent transcript by cleavage factors such as GreA or GreB allows the resumption of elongation from the new 3'terminus. GreA releases sequences of 2 to 3 nucleotides. This chain is Transcription elongation factor GreA, found in Treponema pallidum (strain Nichols).